Reading from the N-terminus, the 145-residue chain is Probable WRKY transcription factor 75 (145 aa).

The segment covering 20 to 38 (SKPELHQGEEESSKVRSEG) has biased composition (basic and acidic residues). The tract at residues 20 to 55 (SKPELHQGEEESSKVRSEGCSKSVESSKKKGKKQRY) is disordered. A DNA-binding region (WRKY) is located at residues 61 to 126 (SQVDILDDGY…YEGVHSHPIE (66 aa)).

This sequence belongs to the WRKY group II-c family.

Its subcellular location is the nucleus. In terms of biological role, transcription factor. Interacts specifically with the W box (5'-(T)TGAC[CT]-3'), a frequently occurring elicitor-responsive cis-acting element. The sequence is that of Probable WRKY transcription factor 75 (WRKY75) from Arabidopsis thaliana (Mouse-ear cress).